The sequence spans 88 residues: Small ribosomal subunit protein uS15c (88 aa).

The protein belongs to the universal ribosomal protein uS15 family. As to quaternary structure, part of the 30S ribosomal subunit.

Its subcellular location is the plastid. It is found in the chloroplast. The polypeptide is Small ribosomal subunit protein uS15c (rps15) (Calycanthus floridus var. glaucus (Eastern sweetshrub)).